The chain runs to 307 residues: D-alanine--D-alanine ligase (307 aa).

Positions 110–299 constitute an ATP-grasp domain; the sequence is KQLWKGAGLP…FDVLVGEILL (190 aa). 136-185 contacts ATP; that stretch reads PVIVKPAHEGSSIGMAKADNTEELGEALVAAEKFDQDVLVEAWVNGPEYT. Residues D253, E266, and N268 each contribute to the Mg(2+) site.

The protein belongs to the D-alanine--D-alanine ligase family. Mg(2+) is required as a cofactor. Mn(2+) serves as cofactor.

It localises to the cytoplasm. It catalyses the reaction 2 D-alanine + ATP = D-alanyl-D-alanine + ADP + phosphate + H(+). It functions in the pathway cell wall biogenesis; peptidoglycan biosynthesis. In terms of biological role, cell wall formation. This Alcanivorax borkumensis (strain ATCC 700651 / DSM 11573 / NCIMB 13689 / SK2) protein is D-alanine--D-alanine ligase.